Here is a 64-residue protein sequence, read N- to C-terminus: Small, acid-soluble spore protein D (64 aa).

This sequence belongs to the alpha/beta-type SASP family.

Functionally, SASP are bound to spore DNA. They are double-stranded DNA-binding proteins that cause DNA to change to an a-like conformation. They protect the DNA backbone from chemical and enzymatic cleavage and are thus involved in dormant spore's high resistance to UV light. The polypeptide is Small, acid-soluble spore protein D (sspD) (Bacillus subtilis (strain 168)).